The primary structure comprises 499 residues: Lysine--tRNA ligase (499 aa).

The Mg(2+) site is built by glutamate 408 and glutamate 415.

The protein belongs to the class-II aminoacyl-tRNA synthetase family. In terms of assembly, homodimer. Mg(2+) serves as cofactor.

Its subcellular location is the cytoplasm. It catalyses the reaction tRNA(Lys) + L-lysine + ATP = L-lysyl-tRNA(Lys) + AMP + diphosphate. The protein is Lysine--tRNA ligase of Bacillus cereus (strain AH820).